The chain runs to 346 residues: Selenide, water dikinase (346 aa).

Residue Sec-17 is part of the active site. Residue Sec-17 is a non-standard amino acid, selenocysteine. Residues Lys-20 and 47–49 (TSD) contribute to the ATP site. Asp-50 is a Mg(2+) binding site. ATP-binding positions include Asp-67, Asp-90, and 138–140 (GHT). Asp-90 is a Mg(2+) binding site. A Mg(2+)-binding site is contributed by Asp-226.

The protein belongs to the selenophosphate synthase 1 family. Class I subfamily. Homodimer. The cofactor is Mg(2+).

The catalysed reaction is hydrogenselenide + ATP + H2O = selenophosphate + AMP + phosphate + 2 H(+). In terms of biological role, synthesizes selenophosphate from selenide and ATP. This Trichlorobacter lovleyi (strain ATCC BAA-1151 / DSM 17278 / SZ) (Geobacter lovleyi) protein is Selenide, water dikinase.